A 636-amino-acid chain; its full sequence is Eisosome protein sle1 (636 aa).

Residues 1 to 297 form a required for targeting the protein to eisosomes region; that stretch reads MSHASKNYNA…HVIIYENKEG (297 aa). 6 disordered regions span residues 111-205, 222-284, 313-387, 400-451, 467-550, and 572-604; these read ANYM…SPAN, YSPS…VPPV, DPSG…TQHF, QYYQ…QPSL, DITP…VNNA, and PSNHAYSEGRSYTFTGGQPPSVPTMPYGSRFAN. 5 stretches are compositionally biased toward polar residues: residues 131 to 159, 166 to 178, 188 to 204, 237 to 255, and 315 to 354; these read PSQQVRPSTSRSPSYASYNSEEVNFQSYQ, RTSQMYMPDNNYS, RRSSSYMVPANSRGSPA, SYNNVQRSSTVRNNTTQKS, and SGSNQASLRSTSTIHYTPSSKRISVIPPNTSNIGSRVVSR. The span at 355 to 383 shows a compositional bias: low complexity; it reads SGQNNNQPAQPGQYNQQSQPVQSYQSGQS. Polar residues-rich tracts occupy residues 400–412 and 422–439; these read QYYQPSSPVQPVQ and PVQSTQYYQPSSPVQPVQ. The span at 471-484 shows a compositional bias: low complexity; it reads TASSTTANNAYASA. The span at 503-512 shows a compositional bias: basic and acidic residues; the sequence is SFERERDSGR. The span at 572–589 shows a compositional bias: polar residues; that stretch reads PSNHAYSEGRSYTFTGGQ.

Component of eisosomes, large cytoplasmic protein assemblies that localize to specialized domains termed MCCs on the plasma membrane.

The protein localises to the cytoplasm. It localises to the cell cortex. Its subcellular location is the cell tip. In terms of biological role, important for the biogenesis of filamentous eisosomes, large cytoplasmic protein assemblies that localize to specialized domains on the plasma membrane to cluster specific proteins at sites of membrane invaginations. The protein is Eisosome protein sle1 (sle1) of Schizosaccharomyces pombe (strain 972 / ATCC 24843) (Fission yeast).